The chain runs to 290 residues: OTU domain-containing protein 6A (290 aa).

The interval Gln27–Ala117 is disordered. The segment covering Ser49–Glu68 has biased composition (basic and acidic residues). The segment covering Lys95–Arg108 has biased composition (basic residues). Residues Leu142 to Ile276 enclose the OTU domain. The cys-loop stretch occupies residues Ile147–Cys153. Asp150 is a catalytic residue. Cys153 serves as the catalytic Nucleophile. Residues Ile211–Leu221 are variable-loop. Residues Tyr259–His269 are his-loop. The active site involves His269.

It carries out the reaction Thiol-dependent hydrolysis of ester, thioester, amide, peptide and isopeptide bonds formed by the C-terminal Gly of ubiquitin (a 76-residue protein attached to proteins as an intracellular targeting signal).. Its function is as follows. Deubiquitinating enzyme that hydrolyzes 'Lys-27'-, 'Lys-29'- and 'Lys-33'-linked polyubiquitin chains. Also able to hydrolyze 'Lys-11'-linked ubiquitin chains. The polypeptide is OTU domain-containing protein 6A (Otud6a) (Mus musculus (Mouse)).